The chain runs to 270 residues: 3-methyl-2-oxobutanoate hydroxymethyltransferase (270 aa).

Positions 50 and 89 each coordinate Mg(2+). 3-methyl-2-oxobutanoate is bound by residues 50 to 51 (DS), D89, and K118. E120 is a Mg(2+) binding site. E187 (proton acceptor) is an active-site residue.

Belongs to the PanB family. Homodecamer; pentamer of dimers. Mg(2+) is required as a cofactor.

Its subcellular location is the cytoplasm. The enzyme catalyses 3-methyl-2-oxobutanoate + (6R)-5,10-methylene-5,6,7,8-tetrahydrofolate + H2O = 2-dehydropantoate + (6S)-5,6,7,8-tetrahydrofolate. It participates in cofactor biosynthesis; (R)-pantothenate biosynthesis; (R)-pantoate from 3-methyl-2-oxobutanoate: step 1/2. Catalyzes the reversible reaction in which hydroxymethyl group from 5,10-methylenetetrahydrofolate is transferred onto alpha-ketoisovalerate to form ketopantoate. The polypeptide is 3-methyl-2-oxobutanoate hydroxymethyltransferase (Helicobacter pylori (strain P12)).